Consider the following 275-residue polypeptide: MSDLQHIIDDAFERRDSITPNSVDPIVREAVLQTIDMLDAGQIRVAEKIAGEWVVHQWVKKAVLLYFRINDNAVLQGAGTQYYDKVPLKFADYTPERFKQESIRVVPPATVRKGSFIARNAVLLPSYVNIGAYVGEGSMVDTWATVGSCAQIGANVHLSGGVGIGGVLEPLQAGPTIIEDNCFIGARSEVVEGVIVGEGSVISMGVFIGQSTRIYDRETGEIHYGRVPPGSVVVSGSLPSKCGKYSLYAAVIVKKVDAKTRSKVGINALLRSIDD.

Positions 104 and 141 each coordinate substrate.

It belongs to the transferase hexapeptide repeat family. As to quaternary structure, homotrimer.

Its subcellular location is the cytoplasm. The catalysed reaction is (S)-2,3,4,5-tetrahydrodipicolinate + succinyl-CoA + H2O = (S)-2-succinylamino-6-oxoheptanedioate + CoA. It participates in amino-acid biosynthesis; L-lysine biosynthesis via DAP pathway; LL-2,6-diaminopimelate from (S)-tetrahydrodipicolinate (succinylase route): step 1/3. This chain is 2,3,4,5-tetrahydropyridine-2,6-dicarboxylate N-succinyltransferase, found in Tolumonas auensis (strain DSM 9187 / NBRC 110442 / TA 4).